The sequence spans 309 residues: UDP-N-acetylenolpyruvoylglucosamine reductase (309 aa).

Residues 24 to 187 (RVGGPADWLF…TKAVFEAPRG (164 aa)) enclose the FAD-binding PCMH-type domain. Arg-167 is an active-site residue. Basic and acidic residues predominate over residues 200-213 (LARRDATQPTKERS). A disordered region spans residues 200–230 (LARRDATQPTKERSAGSTFRNPAGFSSTGRS). The span at 214–228 (AGSTFRNPAGFSSTG) shows a compositional bias: polar residues. Catalysis depends on Ser-216, which acts as the Proton donor. The active site involves Glu-298.

This sequence belongs to the MurB family. Requires FAD as cofactor.

The protein resides in the cytoplasm. The catalysed reaction is UDP-N-acetyl-alpha-D-muramate + NADP(+) = UDP-N-acetyl-3-O-(1-carboxyvinyl)-alpha-D-glucosamine + NADPH + H(+). Its pathway is cell wall biogenesis; peptidoglycan biosynthesis. Functionally, cell wall formation. This Roseobacter denitrificans (strain ATCC 33942 / OCh 114) (Erythrobacter sp. (strain OCh 114)) protein is UDP-N-acetylenolpyruvoylglucosamine reductase.